A 355-amino-acid chain; its full sequence is tRNA-specific 2-thiouridylase MnmA (355 aa).

Residues Leu6–Ser13 and Leu33 each bind ATP. The active-site Nucleophile is Cys100. Residues Cys100 and Cys195 are joined by a disulfide bond. Gly123 serves as a coordination point for ATP. The segment at Lys145–Gln147 is interaction with tRNA. The active-site Cysteine persulfide intermediate is Cys195.

Belongs to the MnmA/TRMU family.

The protein resides in the cytoplasm. The enzyme catalyses S-sulfanyl-L-cysteinyl-[protein] + uridine(34) in tRNA + AH2 + ATP = 2-thiouridine(34) in tRNA + L-cysteinyl-[protein] + A + AMP + diphosphate + H(+). Functionally, catalyzes the 2-thiolation of uridine at the wobble position (U34) of tRNA, leading to the formation of s(2)U34. This is tRNA-specific 2-thiouridylase MnmA from Borrelia garinii subsp. bavariensis (strain ATCC BAA-2496 / DSM 23469 / PBi) (Borreliella bavariensis).